A 904-amino-acid chain; its full sequence is Transcription factor E2F7 (904 aa).

Positions 61–80 (TPDRNPITPVKPVDRQPQVE) are disordered. Residue serine 96 is modified to Phosphoserine. Residues 143–212 (RKQKSLGLLC…VAKNQYGWHG (70 aa)) mediate DNA binding. The segment covering 252–269 (GERRKDGSPDPRDPHLLD) has biased composition (basic and acidic residues). The segment at 252–283 (GERRKDGSPDPRDPHLLDFSEADYPSSSANSR) is disordered. A DNA-binding region spans residues 283 to 368 (RKDKSLRIMS…GRKPAFKWIG (86 aa)). Phosphoserine is present on serine 411. The tract at residues 560–628 (LSPESRSEED…VMPKKPSSST (69 aa)) is disordered. The residue at position 833 (serine 833) is a Phosphoserine. Residues 846–904 (AEQSPAPATPKSIQRRHRETFFKTPGSLGDPVFRRKERNQSRNTSSAQRRLEISSSGPD) form a disordered region. The span at 886–904 (SRNTSSAQRRLEISSSGPD) shows a compositional bias: polar residues.

Belongs to the E2F/DP family. In terms of assembly, interacts with HIF1A. Homodimer and heterodimer: mainly forms homodimers and, to a lesser extent, heterodimers with E2F8. Dimerization is important for DNA-binding. Interacts with MN1. As to expression, widely expressed with highest levels in skin and thymus and very low levels in brain, muscle and stomach. Expressed in trophoblast giant cells throughout placenta development (at protein level).

It is found in the nucleus. In terms of biological role, atypical E2F transcription factor that participates in various processes such as angiogenesis, polyploidization of specialized cells and DNA damage response. Mainly acts as a transcription repressor that binds DNA independently of DP proteins and specifically recognizes the E2 recognition site 5'-TTTC[CG]CGC-3'. Directly represses transcription of classical E2F transcription factors such as E2F1. Acts as a regulator of S-phase by recognizing and binding the E2-related site 5'-TTCCCGCC-3' and mediating repression of G1/S-regulated genes. Plays a key role in polyploidization of cells in placenta and liver by regulating the endocycle, probably by repressing genes promoting cytokinesis and antagonizing action of classical E2F proteins (E2F1, E2F2 and/or E2F3). Required for placental development by promoting polyploidization of trophoblast giant cells. Also involved in DNA damage response: up-regulated by p53/TP53 following genotoxic stress and acts as a downstream effector of p53/TP53-dependent repression by mediating repression of indirect p53/TP53 target genes involved in DNA replication. Acts as a promoter of sprouting angiogenesis, possibly by acting as a transcription activator: associates with HIF1A, recognizes and binds the VEGFA promoter, which is different from canonical E2 recognition site, and activates expression of the VEGFA gene. Acts as a negative regulator of keratinocyte differentiation. This Mus musculus (Mouse) protein is Transcription factor E2F7 (E2f7).